Reading from the N-terminus, the 234-residue chain is Membrane glycoprotein RL11 (234 aa).

An N-terminal signal peptide occupies residues 1 to 23 (MQTYSTPLTLIIVTSLFLFTTQG). Residues 183–203 (LHCAWVSGLMIFVGALVICFL) form a helical membrane-spanning segment.

The protein localises to the host membrane. The polypeptide is Membrane glycoprotein RL11 (RL11) (Human cytomegalovirus (strain Merlin) (HHV-5)).